The primary structure comprises 540 residues: Chaperonin GroEL (540 aa).

ATP contacts are provided by residues threonine 30 to proline 33, aspartate 87 to threonine 91, glycine 415, and aspartate 496.

It belongs to the chaperonin (HSP60) family. As to quaternary structure, forms a cylinder of 14 subunits composed of two heptameric rings stacked back-to-back. Interacts with the co-chaperonin GroES.

Its subcellular location is the cytoplasm. The catalysed reaction is ATP + H2O + a folded polypeptide = ADP + phosphate + an unfolded polypeptide.. Together with its co-chaperonin GroES, plays an essential role in assisting protein folding. The GroEL-GroES system forms a nano-cage that allows encapsulation of the non-native substrate proteins and provides a physical environment optimized to promote and accelerate protein folding. The chain is Chaperonin GroEL from Symbiobacterium thermophilum (strain DSM 24528 / JCM 14929 / IAM 14863 / T).